Reading from the N-terminus, the 598-residue chain is Nuclear receptor subfamily 4 group A member 2 (598 aa).

Residues Met1–Tyr22 are disordered. A compositionally biased stretch (low complexity) spans Tyr8–Tyr22. The nuclear receptor DNA-binding region spans Glu260–Thr335. NR C4-type zinc fingers lie at residues Cys263–Cys283 and Cys299–Cys318. Positions Phe287–Arg314 match the Bipartite nuclear localization signal (NLS1) motif. Residues Ser337–Pro361 form a disordered region. The Nuclear localization signal (NLS1) motif lies at Leu338–Lys350. Residues Pro352–Pro361 are compositionally biased toward pro residues. An NR LBD domain is found at Pro360–Thr595. The short motif at Phe443–Ala452 is the nuclear export sequence (NES1) element. Positions Gln568–Lys577 match the nuclear export sequence (NES2) motif.

The protein belongs to the nuclear hormone receptor family. NR4 subfamily. Interacts with SFPQ, NCOR2, SIN3A and HADC1. The interaction with NCOR2 increases in the absence of PITX3. Interacts with PER2.

It localises to the cytoplasm. The protein resides in the nucleus. Transcriptional regulator which is important for the differentiation and maintenance of meso-diencephalic dopaminergic (mdDA) neurons during development. It is crucial for expression of a set of genes such as SLC6A3, SLC18A2, TH and DRD2 which are essential for development of mdDA neurons. The sequence is that of Nuclear receptor subfamily 4 group A member 2 (NR4A2) from Bos taurus (Bovine).